The chain runs to 142 residues: Hemoglobin subunit alpha (142 aa).

Positions 2 to 142 constitute a Globin domain; sequence VLSPADKTNV…VSTVLTSKYR (141 aa). Ser-4 bears the Phosphoserine mark. N6-succinyllysine is present on Lys-8. Thr-9 carries the phosphothreonine modification. An N6-succinyllysine modification is found at Lys-12. Lys-17 carries the N6-acetyllysine; alternate modification. Lys-17 is modified (N6-succinyllysine; alternate). A Phosphotyrosine modification is found at Tyr-25. The residue at position 36 (Ser-36) is a Phosphoserine. An N6-succinyllysine modification is found at Lys-41. Ser-50 is modified (phosphoserine). Position 59 (His-59) interacts with O2. Residue His-88 coordinates heme b. Ser-103 bears the Phosphoserine mark. Phosphothreonine is present on Thr-109. Phosphoserine is present on residues Ser-125 and Ser-132. Phosphothreonine is present on residues Thr-135 and Thr-138. Residue Ser-139 is modified to Phosphoserine.

Belongs to the globin family. Heterotetramer of two alpha chains and two beta chains. Red blood cells.

Involved in oxygen transport from the lung to the various peripheral tissues. Functionally, hemopressin acts as an antagonist peptide of the cannabinoid receptor CNR1. Hemopressin-binding efficiently blocks cannabinoid receptor CNR1 and subsequent signaling. The chain is Hemoglobin subunit alpha (HBA) from Piliocolobus badius (Western red colobus).